The primary structure comprises 91 residues: Defensin-like protein 95 (91 aa).

Positions 1 to 27 are cleaved as a signal peptide; the sequence is MGSLKLSTFAIVVCLSILLISPIEVNG. 4 disulfide bridges follow: Cys-31-Cys-76, Cys-38-Cys-63, Cys-47-Cys-73, and Cys-51-Cys-75.

The protein belongs to the DEFL family.

Its subcellular location is the secreted. The sequence is that of Defensin-like protein 95 from Arabidopsis thaliana (Mouse-ear cress).